The following is an 84-amino-acid chain: Cell division topological specificity factor (84 aa).

It belongs to the MinE family.

Its function is as follows. Prevents the cell division inhibition by proteins MinC and MinD at internal division sites while permitting inhibition at polar sites. This ensures cell division at the proper site by restricting the formation of a division septum at the midpoint of the long axis of the cell. The polypeptide is Cell division topological specificity factor (Pseudomonas fluorescens (strain ATCC BAA-477 / NRRL B-23932 / Pf-5)).